A 77-amino-acid polypeptide reads, in one-letter code: UPF0346 protein lin1971 (77 aa).

This sequence belongs to the UPF0346 family.

This is UPF0346 protein lin1971 from Listeria innocua serovar 6a (strain ATCC BAA-680 / CLIP 11262).